A 295-amino-acid polypeptide reads, in one-letter code: 3-methyl-2-oxobutanoate hydroxymethyltransferase (295 aa).

Positions 1–30 (MTSGRAMSPEETAPYGTGPARAESAPDAPA) are disordered. Mg(2+)-binding residues include aspartate 76 and aspartate 115. 3-methyl-2-oxobutanoate is bound by residues 76–77 (DS), aspartate 115, and lysine 145. Mg(2+) is bound at residue glutamate 147. Catalysis depends on glutamate 213, which acts as the Proton acceptor.

Belongs to the PanB family. In terms of assembly, homodecamer; pentamer of dimers. Mg(2+) serves as cofactor.

The protein resides in the cytoplasm. The enzyme catalyses 3-methyl-2-oxobutanoate + (6R)-5,10-methylene-5,6,7,8-tetrahydrofolate + H2O = 2-dehydropantoate + (6S)-5,6,7,8-tetrahydrofolate. The protein operates within cofactor biosynthesis; (R)-pantothenate biosynthesis; (R)-pantoate from 3-methyl-2-oxobutanoate: step 1/2. Catalyzes the reversible reaction in which hydroxymethyl group from 5,10-methylenetetrahydrofolate is transferred onto alpha-ketoisovalerate to form ketopantoate. In Nocardioides sp. (strain ATCC BAA-499 / JS614), this protein is 3-methyl-2-oxobutanoate hydroxymethyltransferase.